The following is a 108-amino-acid chain: Succinate dehydrogenase assembly factor 4, mitochondrial (108 aa).

Low complexity predominate over residues 33 to 46 (NNNNNNNNNNNNNN). 2 disordered regions span residues 33 to 59 (NNNNNNNNNNNNNNISNKKAEMSKENQ) and 79 to 108 (NPITKEIGGPKGPEPTRYNDWERNGRVSDF). The span at 95–108 (RYNDWERNGRVSDF) shows a compositional bias: basic and acidic residues.

The protein belongs to the SDHAF4 family. Interacts with SdhA in its FAD-bound form.

The protein resides in the mitochondrion matrix. Its function is as follows. Plays an essential role in the assembly of succinate dehydrogenase (SDH), an enzyme complex (also referred to as respiratory complex II) that is a component of both the tricarboxylic acid (TCA) cycle and the mitochondrial electron transport chain, and which couples the oxidation of succinate to fumarate with the reduction of ubiquinone (coenzyme Q) to ubiquinol. Binds to the flavoprotein subunit SdhA in its FAD-bound form, blocking the generation of excess reactive oxygen species (ROS) and facilitating its assembly with the iron-sulfur protein subunit SdhB into the SDH catalytic dimer. This is Succinate dehydrogenase assembly factor 4, mitochondrial from Dictyostelium discoideum (Social amoeba).